Reading from the N-terminus, the 327-residue chain is MDSWVVLLGLQIIWLPLLTHGTAPTPTLRFVAVGDWGGVPNAPFHTAREMANAKEIARTVQTMGADFIMSLGDNFYFTGVHDASDKRFQETFEDVFSDRALRNIPWYVLAGNHDHLGNVSAQIAYSKISKRWNFPSPYYRLRFKIPRTNITVAIFMLDTVMLCGNSDDFASQQPKMPRDLGVARTQLSWLKKQLAAAKEDYVLVAGHYPIWSIAEHGPTRCLVKNLRPLLATYGVTAYLCGHDHNLQYLQDENGVGYVLSGAGNFMDPSVRHQRKVPNGYLRFHYGSEDSLGGFTHVEISPKEMTIIYVEASGKSLFKTSLPRRPRP.

Residues 1-22 (MDSWVVLLGLQIIWLPLLTHGT) form the signal peptide. The Fe cation site is built by Asp-35, Asp-73, Tyr-76, and Asn-112. Asn-118 and Asn-149 each carry an N-linked (GlcNAc...) asparagine glycan. The cysteines at positions 163 and 221 are disulfide-linked. Fe cation contacts are provided by His-207, His-242, and His-244.

In terms of assembly, exists either as monomer or, after proteolytic processing, as a dimer of two chains linked by disulfide bond(s). Fe cation serves as cofactor. As to expression, characteristic constituent of osteoclasts.

It localises to the lysosome. It carries out the reaction a phosphate monoester + H2O = an alcohol + phosphate. Functionally, may play a role in the process of bone resorption. The osteoclastic trap acts on nucleotide tri- and diphosphates with higher affinity, compared with other substrates. This is Tartrate-resistant acid phosphatase type 5 (Acp5) from Mus musculus (Mouse).